We begin with the raw amino-acid sequence, 473 residues long: Argininosuccinate lyase (473 aa).

The protein belongs to the lyase 1 family. Argininosuccinate lyase subfamily.

Its subcellular location is the cytoplasm. The catalysed reaction is 2-(N(omega)-L-arginino)succinate = fumarate + L-arginine. The protein operates within amino-acid biosynthesis; L-arginine biosynthesis; L-arginine from L-ornithine and carbamoyl phosphate: step 3/3. This is Argininosuccinate lyase from Mycobacteroides abscessus (strain ATCC 19977 / DSM 44196 / CCUG 20993 / CIP 104536 / JCM 13569 / NCTC 13031 / TMC 1543 / L948) (Mycobacterium abscessus).